A 291-amino-acid polypeptide reads, in one-letter code: Alpha/beta-gliadin A-II (291 aa).

Positions 1-20 (MKTFPILALLAIVATTATTA) are cleaved as a signal peptide. Low complexity predominate over residues 32-55 (NPSQQQPQEQVPLVQEQQFQGQQQ). Disordered regions lie at residues 32–120 (NPSQ…QQQQ) and 227–250 (QQYP…GSFQ). Pro residues-rich tracts occupy residues 56-71 (PFPP…PFPS) and 81-104 (FPQP…PQPQ). 2 stretches are compositionally biased toward low complexity: residues 105 to 120 (PQYS…QQQQ) and 227 to 237 (QQYPSGQGFFQ). Polar residues predominate over residues 238-250 (PSQQNPQAQGSFQ).

It belongs to the gliadin/glutenin family. Substrate of transglutaminase.

Its function is as follows. Gliadin is the major seed storage protein in wheat. The chain is Alpha/beta-gliadin A-II from Triticum aestivum (Wheat).